Reading from the N-terminus, the 139-residue chain is ATP synthase epsilon chain, chloroplastic (139 aa).

The protein belongs to the ATPase epsilon chain family. As to quaternary structure, F-type ATPases have 2 components, CF(1) - the catalytic core - and CF(0) - the membrane proton channel. CF(1) has five subunits: alpha(3), beta(3), gamma(1), delta(1), epsilon(1). CF(0) has three main subunits: a, b and c.

Its subcellular location is the plastid. The protein localises to the chloroplast thylakoid membrane. In terms of biological role, produces ATP from ADP in the presence of a proton gradient across the membrane. The sequence is that of ATP synthase epsilon chain, chloroplastic from Welwitschia mirabilis (Tree tumbo).